The sequence spans 159 residues: Single-stranded DNA-binding protein 2 (159 aa).

One can recognise an SSB domain in the interval 2 to 104; it reads MNRVVLVGRL…VVAESVQFLE (103 aa). A disordered region spans residues 106–159; the sequence is RNHAEGATSNNYQNEANYSNNNKTSSYRADTSQKSDSFANEGKPIDINPDDLPF. The segment covering 114–127 has biased composition (low complexity); sequence SNNYQNEANYSNNN. A compositionally biased stretch (polar residues) spans 128–143; the sequence is KTSSYRADTSQKSDSF.

In terms of assembly, homotetramer.

The chain is Single-stranded DNA-binding protein 2 (ssb2) from Listeria innocua serovar 6a (strain ATCC BAA-680 / CLIP 11262).